A 320-amino-acid chain; its full sequence is 3-hydroxybenzoate 6-hydroxylase 2 (320 aa).

The disordered stretch occupies residues 1 to 25 (MRSTNTRSARSRPTKRSVNASATPT). The segment covering 16–25 (RSVNASATPT) has biased composition (polar residues).

This sequence belongs to the 3-hydroxybenzoate 6-hydroxylase family. FAD is required as a cofactor.

It carries out the reaction 3-hydroxybenzoate + NADH + O2 + H(+) = 2,5-dihydroxybenzoate + NAD(+) + H2O. In terms of biological role, catalyzes the conversion of 3-hydroxybenzoate to gentisate. This Aquipseudomonas alcaligenes (Pseudomonas alcaligenes) protein is 3-hydroxybenzoate 6-hydroxylase 2 (hbzD).